Reading from the N-terminus, the 381-residue chain is E3 ubiquitin-protein ligase RNF34 (381 aa).

The segment at 56–107 adopts an FYVE-type zinc-finger fold; that stretch reads EGPNIVCKACGLSFSVFRKKHVCCDCKKDFCSLCSVSQENLRRCSTCHLLQE. An SAP 1 domain is found at 115-134; that stretch reads LMRLKVKDLRQYLLLRNVPT. Position 169 is a phosphoserine (serine 169). Residues 216 to 261 are disordered; sequence LASANTDDEDGEEDDDDDDDDDDEDDDEQEENLEEQNPGLSKKKAR. Over residues 221–249 the composition is skewed to acidic residues; it reads TDDEDGEEDDDDDDDDDDEDDDEQEENLE. Serine 263 and serine 265 each carry phosphoserine. The SAP 2 domain maps to 273–287; sequence VEGMSVRQLKEILAR. The RING-type zinc-finger motif lies at 334–369; the sequence is CRICMDAVIDCVLLECGHMVTCTKCGKRMSECPICR.

Interacts with CASP8 and CASP10. Interacts with p53/TP53; involved in p53/TP53 ubiquitination. Interacts (via RING-type zinc finger) with MDM2; the interaction stabilizes MDM2. Interacts (via RING-type zinc finger) with PPARGC1A. Interacts with NOD1. In terms of processing, proteolytically cleaved by caspases upon induction of apoptosis by TNF. Autoubiquitinated (in vitro). As to expression, ubiquitous. Detected in brain, cerebellum, midbrain, hippocampus, striatum, heart, lung, kidney, muscle, spleen and testis.

It localises to the cell membrane. The protein resides in the endomembrane system. It is found in the nucleus. Its subcellular location is the nucleus speckle. The protein localises to the cytoplasm. It localises to the cytosol. It catalyses the reaction S-ubiquitinyl-[E2 ubiquitin-conjugating enzyme]-L-cysteine + [acceptor protein]-L-lysine = [E2 ubiquitin-conjugating enzyme]-L-cysteine + N(6)-ubiquitinyl-[acceptor protein]-L-lysine.. It functions in the pathway protein modification; protein ubiquitination. E3 ubiquitin-protein ligase that regulates several biological processes through the ubiquitin-mediated proteasomal degradation of various target proteins. Ubiquitinates the caspases CASP8 and CASP10, promoting their proteasomal degradation, to negatively regulate cell death downstream of death domain receptors in the extrinsic pathway of apoptosis. May mediate 'Lys-48'-linked polyubiquitination of RIPK1 and its subsequent proteasomal degradation thereby indirectly regulating the tumor necrosis factor-mediated signaling pathway. Negatively regulates p53/TP53 through its direct ubiquitination and targeting to proteasomal degradation. Indirectly, may also negatively regulate p53/TP53 through ubiquitination and degradation of SFN. Mediates PPARGC1A proteasomal degradation probably through ubiquitination thereby indirectly regulating the metabolism of brown fat cells. Possibly involved in innate immunity, through 'Lys-48'-linked polyubiquitination of NOD1 and its subsequent proteasomal degradation. The polypeptide is E3 ubiquitin-protein ligase RNF34 (Rattus norvegicus (Rat)).